Reading from the N-terminus, the 187-residue chain is Calcium and integrin-binding family member 3 (187 aa).

3 EF-hand domains span residues 66-101, 103-138, and 144-179; these read KDNPFRQRIAQVFSEDGDGHMTLDNFLDMFSVMSEM, PRDLKAYYAFKIYDFNNDDYICAWDLEQTVTKLTRG, and EVSLVCEKVLDEADGDHDGRLSLEDFQNMILRAPDF. Ca(2+)-binding residues include D116, N118, D120, Y122, D127, D157, D159, D161, R163, and D168.

Monomer and homodimer. Interacts with ITGA2B (via C-terminus cytoplasmic tail region); the interaction is stabilized/increased in a calcium and magnesium-dependent manner. Interacts with TMC1.

Acts a an auxiliary subunit of the sensory mechanoelectrical transduction (MET) channel in hair cells. Plays a role in regulating hair cell MET channel localization and function. The chain is Calcium and integrin-binding family member 3 (CIB3) from Homo sapiens (Human).